The sequence spans 478 residues: ATP synthase subunit beta (478 aa).

Gly-164 to Thr-171 is an ATP binding site.

It belongs to the ATPase alpha/beta chains family. As to quaternary structure, F-type ATPases have 2 components, CF(1) - the catalytic core - and CF(0) - the membrane proton channel. CF(1) has five subunits: alpha(3), beta(3), gamma(1), delta(1), epsilon(1). CF(0) has three main subunits: a(1), b(2) and c(9-12). The alpha and beta chains form an alternating ring which encloses part of the gamma chain. CF(1) is attached to CF(0) by a central stalk formed by the gamma and epsilon chains, while a peripheral stalk is formed by the delta and b chains.

Its subcellular location is the cell membrane. The enzyme catalyses ATP + H2O + 4 H(+)(in) = ADP + phosphate + 5 H(+)(out). Functionally, produces ATP from ADP in the presence of a proton gradient across the membrane. The catalytic sites are hosted primarily by the beta subunits. This Streptomyces avermitilis (strain ATCC 31267 / DSM 46492 / JCM 5070 / NBRC 14893 / NCIMB 12804 / NRRL 8165 / MA-4680) protein is ATP synthase subunit beta.